The following is a 192-amino-acid chain: uncharacterized protein (192 aa).

This is an uncharacterized protein from Haemophilus influenzae (strain ATCC 51907 / DSM 11121 / KW20 / Rd).